The following is a 273-amino-acid chain: SPRY domain-containing SOCS box protein 1 (273 aa).

At Tyr-31 the chain carries Phosphotyrosine; by MET. One can recognise a B30.2/SPRY domain in the interval 33–231 (KPTRLDLLLD…IRMRYLNGLD (199 aa)). The region spanning 232–273 (PEPLPLMDLCRRSVRLALGRERLGEIHTLPLPASLKAYLLYQ) is the SOCS box domain.

This sequence belongs to the SPSB family. Component of the probable ECS(SPSB1) E3 ubiquitin-protein ligase complex which contains CUL5, RNF7/RBX2, Elongin BC complex and SPSB1. Interacts with CUL5, RNF7, ELOB and ELOC. Directly interacts with MET tyrosine kinase domain in the presence and in the absence of HGF, however HGF treatment has a positive effect on this interaction. When phosphorylated, interacts with RASA1 without affecting its stability. Interacts (via B30.2/SPRY domain) with PAWR; this interaction is direct and occurs in association with the Elongin BC complex. Interacts with NOS2. Interacts with EPHB2.

The protein localises to the cytoplasm. It is found in the cytosol. It functions in the pathway protein modification; protein ubiquitination. Functionally, substrate recognition component of a SCF-like ECS (Elongin BC-CUL2/5-SOCS-box protein) E3 ubiquitin-protein ligase complex which mediates the ubiquitination and subsequent proteasomal degradation of target proteins. Negatively regulates nitric oxide (NO) production and limits cellular toxicity in activated macrophages by mediating the ubiquitination and proteasomal degradation of NOS2. Acts as a bridge which links NOS2 with the ECS E3 ubiquitin ligase complex components ELOC and CUL5. This Homo sapiens (Human) protein is SPRY domain-containing SOCS box protein 1 (SPSB1).